Consider the following 158-residue polypeptide: NAD(P)H-quinone oxidoreductase subunit J, chloroplastic (158 aa).

The protein belongs to the complex I 30 kDa subunit family. In terms of assembly, NDH is composed of at least 16 different subunits, 5 of which are encoded in the nucleus.

The protein localises to the plastid. It localises to the chloroplast thylakoid membrane. The catalysed reaction is a plastoquinone + NADH + (n+1) H(+)(in) = a plastoquinol + NAD(+) + n H(+)(out). It carries out the reaction a plastoquinone + NADPH + (n+1) H(+)(in) = a plastoquinol + NADP(+) + n H(+)(out). In terms of biological role, NDH shuttles electrons from NAD(P)H:plastoquinone, via FMN and iron-sulfur (Fe-S) centers, to quinones in the photosynthetic chain and possibly in a chloroplast respiratory chain. The immediate electron acceptor for the enzyme in this species is believed to be plastoquinone. Couples the redox reaction to proton translocation, and thus conserves the redox energy in a proton gradient. This Buxus microphylla (Littleleaf boxwood) protein is NAD(P)H-quinone oxidoreductase subunit J, chloroplastic.